A 60-amino-acid polypeptide reads, in one-letter code: UPF0434 protein NMCC_0628 (60 aa).

Belongs to the UPF0434 family.

The polypeptide is UPF0434 protein NMCC_0628 (Neisseria meningitidis serogroup C (strain 053442)).